The primary structure comprises 334 residues: Phosphoribosylformylglycinamidine cyclo-ligase (334 aa).

Belongs to the AIR synthase family.

It is found in the cytoplasm. It carries out the reaction 2-formamido-N(1)-(5-O-phospho-beta-D-ribosyl)acetamidine + ATP = 5-amino-1-(5-phospho-beta-D-ribosyl)imidazole + ADP + phosphate + H(+). Its pathway is purine metabolism; IMP biosynthesis via de novo pathway; 5-amino-1-(5-phospho-D-ribosyl)imidazole from N(2)-formyl-N(1)-(5-phospho-D-ribosyl)glycinamide: step 2/2. This is Phosphoribosylformylglycinamidine cyclo-ligase from Thermococcus kodakarensis (strain ATCC BAA-918 / JCM 12380 / KOD1) (Pyrococcus kodakaraensis (strain KOD1)).